A 1078-amino-acid chain; its full sequence is Phosphatidylinositol-3,5-bisphosphate 3-phosphatase MTMR4 (1078 aa).

A Myotubularin phosphatase domain is found at 154 to 571 (DHVKSRFQIE…RALQLWTAVY (418 aa)). Positions 267-290 (RMPNGNPSNKGNNDGSDNSDTDFD) are disordered. Positions 270–282 (NGNPSNKGNNDGS) are enriched in low complexity. Residues Asn-321, Asn-346, and Ile-347 each coordinate a 1,2-diacyl-sn-glycero-3-phospho-(1D-myo-inositol-3,5-bisphosphate). Residues Asn-321, Asn-346, and Ile-347 each coordinate a 1,2-diacyl-sn-glycero-3-phospho-(1D-myo-inositol-3-phosphate). Cys-408 (phosphocysteine intermediate) is an active-site residue. Positions 409, 410, 411, 412, 413, 414, 450, and 454 each coordinate a 1,2-diacyl-sn-glycero-3-phospho-(1D-myo-inositol-3,5-bisphosphate). Residues Ser-409, Asp-410, Gly-411, Trp-412, Asp-413, and Arg-414 each coordinate a 1,2-diacyl-sn-glycero-3-phospho-(1D-myo-inositol-3-phosphate). An a 1,2-diacyl-sn-glycero-3-phospho-(1D-myo-inositol-3-phosphate)-binding site is contributed by Arg-454. Positions 629–648 (SSDPNLNNHQGNLESCSSSK) are enriched in polar residues. The tract at residues 629-694 (SSDPNLNNHQ…SGSATNQNNN (66 aa)) is disordered. Residues 904–935 (VQQRLRQMEASYKQEVDLLRRQVWELQLQLEI) are a coiled coil. Residues 960–982 (DGSDMDDLYSDKSEDRLSEASWE) form a disordered region. Positions 968-982 (YSDKSEDRLSEASWE) are enriched in basic and acidic residues. An FYVE-type zinc finger spans residues 997–1057 (DHMASHCFNC…VCNTCYDHIQ (61 aa)). The Zn(2+) site is built by Cys-1003, Cys-1006, Cys-1019, Cys-1022, Cys-1027, Cys-1030, Cys-1049, and Cys-1052.

The protein belongs to the protein-tyrosine phosphatase family. Non-receptor class myotubularin subfamily. In terms of assembly, homooligomeric.

The protein resides in the early endosome membrane. It localises to the recycling endosome membrane. Its subcellular location is the late endosome membrane. The protein localises to the cytoplasmic vesicle. It is found in the phagosome membrane. It catalyses the reaction a 1,2-diacyl-sn-glycero-3-phospho-(1D-myo-inositol-3-phosphate) + H2O = a 1,2-diacyl-sn-glycero-3-phospho-(1D-myo-inositol) + phosphate. The enzyme catalyses a 1,2-diacyl-sn-glycero-3-phospho-(1D-myo-inositol-3,5-bisphosphate) + H2O = a 1,2-diacyl-sn-glycero-3-phospho-(1D-myo-inositol-5-phosphate) + phosphate. It carries out the reaction 1,2-dioctanoyl-sn-glycero-3-phospho-(1-D-myo-inositol-3-phosphate) + H2O = 1,2-dioctanoyl-sn-glycero-3-phospho-(1D-myo-inositol) + phosphate. The catalysed reaction is 1,2-dioctanoyl-sn-glycero-3-phospho-(1D-myo-inositol-3,5-bisphosphate) + H2O = 1,2-dioctanoyl-sn-glycero-3-phospho-(1D-myo-inositol-5-phosphate) + phosphate. Its function is as follows. Lipid phosphatase that specifically dephosphorylates the D-3 position of phosphatidylinositol 3-phosphate and phosphatidylinositol 3,5-bisphosphate, generating phosphatidylinositol and phosphatidylinositol 5-phosphate. Decreases the levels of phosphatidylinositol 3-phosphate, a phospholipid found in cell membranes where it acts as key regulator of both cell signaling and intracellular membrane traffic, in a subset of endosomal membranes to negatively regulate both endocytic recycling and trafficking and/or maturation of endosomes toward lysosomes. Through phosphatidylinositol 3-phosphate turnover in phagosome membranes regulates phagocytosis and phagosome maturation. By decreasing phosphatidylinositol 3-monophosphate (PI3P) levels in immune cells it can also regulate the innate immune response. Beside its lipid phosphatase activity, can also function as a molecular adapter to regulate midbody abscission during mitotic cytokinesis. Can also negatively regulate TGF-beta and BMP signaling through Smad proteins dephosphorylation and retention in endosomes. This Xenopus laevis (African clawed frog) protein is Phosphatidylinositol-3,5-bisphosphate 3-phosphatase MTMR4 (mtmr4).